The primary structure comprises 232 residues: Large ribosomal subunit protein uL1 (232 aa).

It belongs to the universal ribosomal protein uL1 family. As to quaternary structure, part of the 50S ribosomal subunit.

Functionally, binds directly to 23S rRNA. The L1 stalk is quite mobile in the ribosome, and is involved in E site tRNA release. In terms of biological role, protein L1 is also a translational repressor protein, it controls the translation of the L11 operon by binding to its mRNA. This is Large ribosomal subunit protein uL1 from Azobacteroides pseudotrichonymphae genomovar. CFP2.